The sequence spans 437 residues: Glutamate-1-semialdehyde 2,1-aminomutase (437 aa).

Lysine 273 is modified (N6-(pyridoxal phosphate)lysine).

It belongs to the class-III pyridoxal-phosphate-dependent aminotransferase family. HemL subfamily. Homodimer. Pyridoxal 5'-phosphate is required as a cofactor.

The protein resides in the cytoplasm. It catalyses the reaction (S)-4-amino-5-oxopentanoate = 5-aminolevulinate. Its pathway is porphyrin-containing compound metabolism; protoporphyrin-IX biosynthesis; 5-aminolevulinate from L-glutamyl-tRNA(Glu): step 2/2. The chain is Glutamate-1-semialdehyde 2,1-aminomutase from Chlamydia felis (strain Fe/C-56) (Chlamydophila felis).